Consider the following 20-residue polypeptide: Pregnancy-associated glycoprotein 71D (20 aa).

N-linked (GlcNAc...) asparagine glycosylation occurs at asparagine 4.

Belongs to the peptidase A1 family. In terms of tissue distribution, chorionic epithelium (trophectoderm) and placental cotyledons.

The protein resides in the secreted. It localises to the extracellular space. The sequence is that of Pregnancy-associated glycoprotein 71D from Bison bonasus (European bison).